The chain runs to 160 residues: MTLNLNPLETNLVNLVIVIGLLFWFLRGFLGGILERRRAAILQELQDAESRLKTATENLSQAQSELAAAQQKAEKIRADGQARAAGIRAEGEKRTISVMAAIKAGADADAEADAARIKDSLRREAALAAIDKALAVLPARLDASAQAKLIDSTIKNLENA.

The helical transmembrane segment at 15-35 (LVIVIGLLFWFLRGFLGGILE) threads the bilayer.

Belongs to the ATPase B chain family. F-type ATPases have 2 components, F(1) - the catalytic core - and F(0) - the membrane proton channel. F(1) has five subunits: alpha(3), beta(3), gamma(1), delta(1), epsilon(1). F(0) has four main subunits: a(1), b(1), b'(1) and c(10-14). The alpha and beta chains form an alternating ring which encloses part of the gamma chain. F(1) is attached to F(0) by a central stalk formed by the gamma and epsilon chains, while a peripheral stalk is formed by the delta, b and b' chains.

It is found in the cellular thylakoid membrane. Its function is as follows. F(1)F(0) ATP synthase produces ATP from ADP in the presence of a proton or sodium gradient. F-type ATPases consist of two structural domains, F(1) containing the extramembraneous catalytic core and F(0) containing the membrane proton channel, linked together by a central stalk and a peripheral stalk. During catalysis, ATP synthesis in the catalytic domain of F(1) is coupled via a rotary mechanism of the central stalk subunits to proton translocation. In terms of biological role, component of the F(0) channel, it forms part of the peripheral stalk, linking F(1) to F(0). In Synechococcus sp. (strain CC9605), this protein is ATP synthase subunit b.